We begin with the raw amino-acid sequence, 133 residues long: Late embryogenesis abundant protein B19.3 (133 aa).

Residues 1-133 are disordered; the sequence is MASGQQERSE…IDESKFKTKS (133 aa). Composition is skewed to basic and acidic residues over residues 7-19, 32-102, and 113-133; these read ERSE…REGE, EAQE…EMGR, and GGER…KTKS. 3 consecutive repeat copies span residues 24-43, 44-63, and 64-83. The 3 X 20 AA tandem repeats stretch occupies residues 24-83; it reads GGTGGKTLEAQEHLAEGRSRGGQTRKDQLGEEGYREMGHKGGETRKEQLGEEGYREMGHK.

Belongs to the small hydrophilic plant seed protein family.

Its function is as follows. Lea proteins are late embryonic proteins abundant in higher plant seed embryos. This is Late embryogenesis abundant protein B19.3 (B19.3) from Hordeum vulgare (Barley).